A 130-amino-acid polypeptide reads, in one-letter code: Small ribosomal subunit protein uS9 (130 aa).

It belongs to the universal ribosomal protein uS9 family.

The chain is Small ribosomal subunit protein uS9 from Pseudomonas aeruginosa (strain LESB58).